The chain runs to 72 residues: Alpha-mammal toxin Bot3 (72 aa).

Positions 1–8 (LVMAGVES) are cleaved as a signal peptide. Positions 10-72 (KDGYIVDDRN…VRTKGPGRCN (63 aa)) constitute an LCN-type CS-alpha/beta domain. Disulfide bonds link cysteine 20/cysteine 71, cysteine 24/cysteine 44, cysteine 30/cysteine 54, and cysteine 34/cysteine 56. Asparagine amide is present on asparagine 72.

The protein belongs to the long (4 C-C) scorpion toxin superfamily. Sodium channel inhibitor family. Alpha subfamily. Post-translationally, when the toxin is not amidated, there are 75% loss of toxicity to mice, and total incapacity to bind rat brain synaptosomes. Expressed by the venom gland.

The protein resides in the secreted. Its function is as follows. Alpha toxins bind voltage-independently at site-3 of sodium channels (Nav) and inhibit the inactivation of the activated channels, thereby blocking neuronal transmission. Is active against mammals and binds with high affinity to rat brain synaptosomes. The polypeptide is Alpha-mammal toxin Bot3 (Buthus occitanus tunetanus (Common European scorpion)).